A 383-amino-acid polypeptide reads, in one-letter code: Smad nuclear-interacting protein 1 (383 aa).

Residues 1-10 (MKAGKSERER) are compositionally biased toward basic and acidic residues. The interval 1–209 (MKAGKSERER…NRSKEVPVKE (209 aa)) is disordered. Phosphoserine is present on serine 18. Lysine 28 is covalently cross-linked (Glycyl lysine isopeptide (Lys-Gly) (interchain with G-Cter in SUMO); alternate). Residue lysine 28 forms a Glycyl lysine isopeptide (Lys-Gly) (interchain with G-Cter in SUMO1); alternate linkage. Residue lysine 28 forms a Glycyl lysine isopeptide (Lys-Gly) (interchain with G-Cter in SUMO2); alternate linkage. The span at 28–43 (KQERLSPEPVAHRRPD) shows a compositional bias: basic and acidic residues. Serine 33, serine 48, and serine 50 each carry phosphoserine. Low complexity predominate over residues 44-56 (APAASLSPPAAEP). Residues 59–90 (SGHRGSRARSPAKKKSKSSGRRSKSPRTKRSQ) show a composition bias toward basic residues. Position 91 is a phosphoserine (serine 91). Composition is skewed to basic and acidic residues over residues 99–134 (VKQE…ERDR) and 143–159 (RSSD…DRDS). Residue lysine 100 forms a Glycyl lysine isopeptide (Lys-Gly) (interchain with G-Cter in SUMO2) linkage. Phosphoserine is present on serine 145. Residues 153–194 (QDRDRDSQNLQAQEEERDFHNARRREHRQQNESAGSEAQEVI) are a coiled coil. Lysine 210 is covalently cross-linked (Glycyl lysine isopeptide (Lys-Gly) (interchain with G-Cter in SUMO2)). Positions 268–331 (YLLGRHRRIA…NGTFLNNKRI (64 aa)) constitute an FHA domain. A compositionally biased stretch (basic and acidic residues) spans 359–369 (ESSDTSELDRK). Residues 359–383 (ESSDTSELDRKEDEDDEEEEMVSDS) are disordered. A compositionally biased stretch (acidic residues) spans 370-383 (EDEDDEEEEMVSDS). At serine 381 the chain carries Phosphoserine.

As to quaternary structure, component of activated spliceosome complexes. Binds SMAD4 and CREBBP/EP300. Component of the minor spliceosome, which splices U12-type introns. Binds the SMAD1/OAZ1/PSMB4 complex. Interacts with DROSHA and SMARCA4. Component of the SNARP complex which consists at least of SNIP1, SNW1, THRAP3, BCLAF1 and PNN. In terms of processing, degraded by the proteasome upon binding to the SMAD1/OAZ1/PSMB4 complex.

It is found in the nucleus. Functionally, required for pre-mRNA splicing as component of the spliceosome. As a component of the minor spliceosome, involved in the splicing of U12-type introns in pre-mRNAs. Down-regulates NF-kappa-B signaling by competing with RELA for CREBBP/EP300 binding. Involved in the microRNA (miRNA) biogenesis. May be involved in cyclin-D1/CCND1 mRNA stability through the SNARP complex which associates with both the 3'end of the CCND1 gene and its mRNA. In Mus musculus (Mouse), this protein is Smad nuclear-interacting protein 1 (Snip1).